A 511-amino-acid polypeptide reads, in one-letter code: Maturase K (511 aa).

Belongs to the intron maturase 2 family. MatK subfamily.

The protein localises to the plastid. The protein resides in the chloroplast. Its function is as follows. Usually encoded in the trnK tRNA gene intron. Probably assists in splicing its own and other chloroplast group II introns. This chain is Maturase K, found in Paulownia tomentosa (Princess tree).